A 312-amino-acid polypeptide reads, in one-letter code: Apolipoprotein E (312 aa).

Residues 1-18 form the signal peptide; it reads MKALWALLLVPLLTGCLA. Tandem repeats lie at residues 72–93, 94–115, 116–137, 138–159, 160–181, 182–203, 204–225, and 226–247. The interval 72-247 is 8 X 22 AA approximate tandem repeats; the sequence is VLMEDTMTEV…RLEEVREQME (176 aa). Met135 is modified (methionine sulfoxide). At Ser139 the chain carries Phosphoserine. An LDL and other lipoprotein receptors binding region spans residues 150 to 160; the sequence is HLRKMRKRLMR. An LDL receptor binding region spans residues 150–160; that stretch reads HLRKMRKRLMR. Residue 154-157 coordinates heparin; it reads MRKR. The segment at 202–282 is lipid-binding and lipoprotein association; the sequence is TANLGAGAAQ…GWFEPLVEDM (81 aa). 221–228 lines the heparin pocket; sequence SDRIRGRL. The tract at residues 258-312 is homooligomerization; it reads QQIRLQAEIFQARIKGWFEPLVEDMQRQWANLMEKIQASVATNSIASTTVPLENQ. The specificity for association with VLDL stretch occupies residues 270-282; that stretch reads RIKGWFEPLVEDM.

It belongs to the apolipoprotein A1/A4/E family. As to quaternary structure, homotetramer. May interact with ABCA1; functionally associated with ABCA1 in the biogenesis of HDLs. May interact with APP/A4 amyloid-beta peptide; the interaction is extremely stable in vitro but its physiological significance is unclear. May interact with MAPT. May interact with MAP2. In the cerebrospinal fluid, interacts with secreted SORL1. Interacts with PMEL; this allows the loading of PMEL luminal fragment on ILVs to induce fibril nucleation. Post-translationally, APOE exists as multiple glycosylated and sialylated glycoforms within cells and in plasma. The extent of glycosylation and sialylation are tissue and context specific. In terms of processing, glycated in plasma VLDL. Phosphorylated by FAM20C in the extracellular medium.

It is found in the secreted. Its subcellular location is the extracellular space. The protein localises to the extracellular matrix. The protein resides in the extracellular vesicle. It localises to the endosome. It is found in the multivesicular body. Its function is as follows. APOE is an apolipoprotein, a protein associating with lipid particles, that mainly functions in lipoprotein-mediated lipid transport between organs via the plasma and interstitial fluids. APOE is a core component of plasma lipoproteins and is involved in their production, conversion and clearance. Apolipoproteins are amphipathic molecules that interact both with lipids of the lipoprotein particle core and the aqueous environment of the plasma. As such, APOE associates with chylomicrons, chylomicron remnants, very low density lipoproteins (VLDL) and intermediate density lipoproteins (IDL) but shows a preferential binding to high-density lipoproteins (HDL). It also binds a wide range of cellular receptors including the LDL receptor/LDLR and the very low-density lipoprotein receptor/VLDLR that mediate the cellular uptake of the APOE-containing lipoprotein particles. Finally, APOE also has a heparin-binding activity and binds heparan-sulfate proteoglycans on the surface of cells, a property that supports the capture and the receptor-mediated uptake of APOE-containing lipoproteins by cells. This chain is Apolipoprotein E (Apoe), found in Rattus norvegicus (Rat).